Consider the following 207-residue polypeptide: Guanylate kinase (207 aa).

Positions 6-185 (GLLIVLSGPS…AKNRIQCIVE (180 aa)) constitute a Guanylate kinase-like domain. 13–20 (GPSGVGKG) serves as a coordination point for ATP.

It belongs to the guanylate kinase family.

It localises to the cytoplasm. It catalyses the reaction GMP + ATP = GDP + ADP. Functionally, essential for recycling GMP and indirectly, cGMP. This chain is Guanylate kinase, found in Staphylococcus aureus (strain Mu50 / ATCC 700699).